An 80-amino-acid polypeptide reads, in one-letter code: uncharacterized protein (80 aa).

To M.leprae U650M.

This is an uncharacterized protein from Mycobacterium bovis (strain ATCC BAA-935 / AF2122/97).